A 315-amino-acid polypeptide reads, in one-letter code: Cobalamin biosynthesis protein CobD (315 aa).

The next 5 membrane-spanning stretches (helical) occupy residues 48–70 (IAGI…LSVQ), 75–94 (LHWI…TIAI), 148–170 (LVDG…AMLY), 208–230 (ITSY…SLYI), and 292–314 (LILL…AAYF).

Belongs to the CobD/CbiB family.

It localises to the cell membrane. The protein operates within cofactor biosynthesis; adenosylcobalamin biosynthesis. Its function is as follows. Converts cobyric acid to cobinamide by the addition of aminopropanol on the F carboxylic group. The protein is Cobalamin biosynthesis protein CobD of Leptospira interrogans serogroup Icterohaemorrhagiae serovar copenhageni (strain Fiocruz L1-130).